Consider the following 505-residue polypeptide: Aminoaldehyde dehydrogenase 1a (505 aa).

Asp-101 lines the Na(+) pocket. NAD(+)-binding positions include 161–163 (TPW) and 187–190 (KPSE). Leu-191 is a binding site for Na(+). Residues 241 to 244 (SFET) and Glu-262 contribute to the NAD(+) site. Glu-262 functions as the Proton acceptor in the catalytic mechanism. Cys-296 (nucleophile) is an active-site residue. Positions 395 and 461 each coordinate NAD(+).

This sequence belongs to the aldehyde dehydrogenase family. Forms homodimers.

It catalyses the reaction 4-aminobutanal + NAD(+) + H2O = 4-aminobutanoate + NADH + 2 H(+). It carries out the reaction 3-aminopropanal + NAD(+) + H2O = beta-alanine + NADH + 2 H(+). The enzyme catalyses 4-(trimethylamino)butanal + NAD(+) + H2O = 4-(trimethylamino)butanoate + NADH + 2 H(+). The catalysed reaction is 4-guanidinobutanal + NAD(+) + H2O = 4-guanidinobutanoate + NADH + 2 H(+). It catalyses the reaction betaine aldehyde + NAD(+) + H2O = glycine betaine + NADH + 2 H(+). Its pathway is amine and polyamine biosynthesis; betaine biosynthesis via choline pathway; betaine from betaine aldehyde: step 1/1. Its function is as follows. Dehydrogenase that catalyzes the oxidation of several aminoaldehydes. Metabolizes and detoxifies aldehyde products of polyamine degradation to non-toxic amino acids. Catalyzes the oxidation of 4-aminobutanal and 3-aminopropanal to 4-aminobutanoate and beta-alanine, respectively. Catalyzes the oxidation of 4-(trimethylamino)butanal and 4-guanidinobutanal to 4-trimethylammoniobutanoate and 4-guanidinobutanoate, respectively. Catalyzes the oxidation of betaine aldehyde to glycine betaine. In terms of biological role, dehydrogenase that catalyzes the oxidation of several aminoaldehydes. Catalyzes the oxidation of betaine aldehyde to glycine betaine. Catalyzes the oxidation of 4-(trimethylamino)butanal to 4-trimethylammoniobutanoate. This is Aminoaldehyde dehydrogenase 1a from Zea mays (Maize).